A 98-amino-acid polypeptide reads, in one-letter code: Small ribosomal subunit protein bS20 (98 aa).

The segment covering 1-12 (MAPRKPSKKVGP) has biased composition (basic residues). The segment at 1–31 (MAPRKPSKKVGPQKRPSAEKRVITSKKKQLR) is disordered.

It belongs to the bacterial ribosomal protein bS20 family.

In terms of biological role, binds directly to 16S ribosomal RNA. The polypeptide is Small ribosomal subunit protein bS20 (Chlamydia trachomatis serovar L2 (strain ATCC VR-902B / DSM 19102 / 434/Bu)).